Reading from the N-terminus, the 170-residue chain is Odorant-binding protein 2a (170 aa).

Residues 1-15 form the signal peptide; it reads MKTLFLGVTLGLAAA. Cysteine 74 and cysteine 166 are joined by a disulfide.

It belongs to the calycin superfamily. Lipocalin family. Monomer. As to expression, strongly expressed in the nasal structures, salivary and lachrymal glands, and lung. Expressed in the liver.

It localises to the secreted. Functionally, binds and transports small hydrophobic volatile molecules with a higher affinity for aldehydes and large fatty acids, including undecanal, palmitic acid, efficient aldehydes, benzenic aldehydes, heterocyclic aldehydes and aliphatic acids. The sequence is that of Odorant-binding protein 2a (OBP2A) from Homo sapiens (Human).